The chain runs to 267 residues: Coiled-coil domain-containing protein 172 (267 aa).

2 coiled-coil regions span residues 24-97 (MREV…CEAI) and 128-191 (LMKE…EETE).

The protein belongs to the CCDC172 family. As to quaternary structure, may interact with TEKT2.

Its subcellular location is the cytoplasm. The protein resides in the cell projection. It is found in the cilium. This is Coiled-coil domain-containing protein 172 (Ccdc172) from Mus musculus (Mouse).